We begin with the raw amino-acid sequence, 373 residues long: Histidinol-phosphate aminotransferase (373 aa).

A compositionally biased stretch (polar residues) spans 1–10; it reads MTGVPGSSIT. The interval 1-45 is disordered; that stretch reads MTGVPGSSITLDDLPLRDDLRGKSPYGAPQLSVPVRLNTNENPHP. Lys-237 is modified (N6-(pyridoxal phosphate)lysine).

Belongs to the class-II pyridoxal-phosphate-dependent aminotransferase family. Histidinol-phosphate aminotransferase subfamily. In terms of assembly, homodimer. Pyridoxal 5'-phosphate serves as cofactor.

It catalyses the reaction L-histidinol phosphate + 2-oxoglutarate = 3-(imidazol-4-yl)-2-oxopropyl phosphate + L-glutamate. It functions in the pathway amino-acid biosynthesis; L-histidine biosynthesis; L-histidine from 5-phospho-alpha-D-ribose 1-diphosphate: step 7/9. The sequence is that of Histidinol-phosphate aminotransferase from Mycolicibacterium vanbaalenii (strain DSM 7251 / JCM 13017 / BCRC 16820 / KCTC 9966 / NRRL B-24157 / PYR-1) (Mycobacterium vanbaalenii).